Reading from the N-terminus, the 358-residue chain is Alanine racemase (358 aa).

Residue Lys35 is the Proton acceptor; specific for D-alanine of the active site. Residue Lys35 is modified to N6-(pyridoxal phosphate)lysine. Arg130 provides a ligand contact to substrate. The Proton acceptor; specific for L-alanine role is filled by Tyr255. Met303 contributes to the substrate binding site.

This sequence belongs to the alanine racemase family. It depends on pyridoxal 5'-phosphate as a cofactor.

The enzyme catalyses L-alanine = D-alanine. Its pathway is amino-acid biosynthesis; D-alanine biosynthesis; D-alanine from L-alanine: step 1/1. Functionally, catalyzes the interconversion of L-alanine and D-alanine. May also act on other amino acids. The polypeptide is Alanine racemase (alr) (Shewanella putrefaciens (strain CN-32 / ATCC BAA-453)).